The following is a 423-amino-acid chain: NDP-N-acetyl-D-galactosaminuronic acid dehydrogenase (423 aa).

11 to 28 (TISVVGLGYIGLPTATVL) is a binding site for NAD(+). The active-site Proton donor/acceptor is K218. The active-site Nucleophile is the C272.

It belongs to the UDP-glucose/GDP-mannose dehydrogenase family.

In terms of biological role, probably involved in the synthesis of sugar components of EPS I, by converting NDP-N-acetyl-D-galactosamine into NDP-N-acetyl-D-galactosaminuronic acid. This chain is NDP-N-acetyl-D-galactosaminuronic acid dehydrogenase (epsD), found in Ralstonia nicotianae (strain ATCC BAA-1114 / GMI1000) (Ralstonia solanacearum).